A 75-amino-acid polypeptide reads, in one-letter code: Putative sulfur carrier protein TsuB (75 aa).

Cysteine 13 serves as the catalytic Cysteine persulfide intermediate.

It belongs to the sulfur carrier protein TusA family.

Involved in thiosulfate metabolism. This is Putative sulfur carrier protein TsuB from Escherichia coli (strain K12).